The primary structure comprises 488 residues: GTPase Der (488 aa).

The EngA-type G 1 domain occupies 3 to 166 (PVVALVGRPN…YALAPYAEAL (164 aa)). GTP contacts are provided by residues 9 to 16 (GRPNVGKS), 56 to 60 (DTGGI), and 118 to 121 (NKVD). A disordered region spans residues 168–192 (LNRDGDDEEEKEEREYTEEEAEAEQ). Residues 172-190 (GDDEEEKEEREYTEEEAEA) show a composition bias toward acidic residues. An EngA-type G 2 domain is found at 200-373 (IKLAVIGKPN…SVQEAYESAT (174 aa)). GTP contacts are provided by residues 206 to 213 (GKPNVGKS), 253 to 257 (DTAGV), and 318 to 321 (NKWD). In terms of domain architecture, KH-like spans 374-458 (RRVSTSMLTR…PIQVRFQDGD (85 aa)).

Belongs to the TRAFAC class TrmE-Era-EngA-EngB-Septin-like GTPase superfamily. EngA (Der) GTPase family. In terms of assembly, associates with the 50S ribosomal subunit.

In terms of biological role, GTPase that plays an essential role in the late steps of ribosome biogenesis. The protein is GTPase Der of Shewanella woodyi (strain ATCC 51908 / MS32).